The chain runs to 977 residues: Macrophage colony-stimulating factor 1 receptor (977 aa).

The N-terminal stretch at 1–19 is a signal peptide; that stretch reads MELGPPLVLLLATVWHGQG. Topologically, residues 20–515 are extracellular; sequence APVIEPSGPE…QLPDESLFTP (496 aa). Ig-like C2-type domains are found at residues 24–104, 107–197, 204–298, 299–397, and 398–503; these read EPSG…VKDP, SWNL…KVNR, QIKL…VVES, AYLN…LTLR, and YPPE…SLGQ. Cystine bridges form between cysteine 42–cysteine 84, cysteine 127–cysteine 177, and cysteine 224–cysteine 278. 2 N-linked (GlcNAc...) asparagine glycosylation sites follow: asparagine 45 and asparagine 73. N-linked (GlcNAc...) asparagine glycosylation is found at asparagine 302, asparagine 335, asparagine 389, asparagine 410, asparagine 449, asparagine 478, and asparagine 491. The cysteines at positions 417 and 483 are disulfide-linked. A helical membrane pass occupies residues 516-536; that stretch reads VVVACMSVMSLLVLLLLLLLY. Topologically, residues 537–977 are cytoplasmic; the sequence is KYKQKPKYQV…LLQPNNYQFC (441 aa). Residues 540–572 form a regulatory juxtamembrane domain region; sequence QKPKYQVRWKIIERYEGNSYTFIDPTQLPYNEK. Phosphotyrosine; by autocatalysis occurs at positions 544 and 559. One can recognise a Protein kinase domain in the interval 580-913; it reads LQFGKTLGAG…ICFLLQEQAR (334 aa). ATP contacts are provided by residues 586-594 and lysine 614; that span reads LGAGAFGKV. Residues tyrosine 697 and tyrosine 706 each carry the phosphotyrosine; by autocatalysis modification. Serine 711 bears the Phosphoserine mark. Phosphotyrosine; by autocatalysis is present on tyrosine 721. Residue aspartate 776 is the Proton acceptor of the active site. An activation loop region spans residues 794 to 816; sequence DFGLARDIMNDSNYVVKGNARLP. A phosphotyrosine; by autocatalysis mark is found at tyrosine 807 and tyrosine 921. The segment at 921–957 is disordered; the sequence is YANLPSSGGSSGSDSGGGSSGGSSSEPEEESSSEHLA. A compositionally biased stretch (gly residues) spans 929–941; the sequence is GSSGSDSGGGSSG. Phosphotyrosine; by autocatalysis is present on tyrosine 974.

This sequence belongs to the protein kinase superfamily. Tyr protein kinase family. CSF-1/PDGF receptor subfamily. In terms of assembly, monomer. Homodimer. Interacts with CSF1 and IL34. Interaction with dimeric CSF1 or IL34 leads to receptor homodimerization. Interacts with INPPL1/SHIP2 and THOC5. Interacts (tyrosine phosphorylated) with PLCG2 (via SH2 domain). Interacts (tyrosine phosphorylated) with PIK3R1 (via SH2 domain). Interacts (tyrosine phosphorylated) with FYN, YES1 and SRC (via SH2 domain). Interacts (tyrosine phosphorylated) with CBL, GRB2 and SLA2. Autophosphorylated in response to CSF1 or IL34 binding. Phosphorylation at Tyr-559 is important for normal down-regulation of signaling by ubiquitination, internalization and degradation. Phosphorylation at Tyr-559 and Tyr-807 is important for interaction with SRC family members, including FYN, YES1 and SRC, and for subsequent activation of these protein kinases. Phosphorylation at Tyr-697 and Tyr-921 is important for interaction with GRB2. Phosphorylation at Tyr-721 is important for interaction with PIK3R1. Phosphorylation at Tyr-721 and Tyr-807 is important for interaction with PLCG2. Phosphorylation at Tyr-974 is important for interaction with CBL. Dephosphorylation by PTPN2 negatively regulates downstream signaling and macrophage differentiation. Post-translationally, ubiquitinated. Becomes rapidly polyubiquitinated after autophosphorylation, leading to its degradation. In terms of tissue distribution, widely expressed.

It localises to the cell membrane. The enzyme catalyses L-tyrosyl-[protein] + ATP = O-phospho-L-tyrosyl-[protein] + ADP + H(+). With respect to regulation, present in an inactive conformation in the absence of bound ligand. CSF1 or IL34 binding leads to dimerization and activation by autophosphorylation on tyrosine residues. Inhibited by imatinib/STI-571 (Gleevec), dasatinib, sunitinib/SU11248, lestaurtinib/CEP-701, midostaurin/PKC-412, Ki20227, linifanib/ABT-869, Axitinib/AG013736, sorafenib/BAY 43-9006 and GW2580. Its function is as follows. Tyrosine-protein kinase that acts as a cell-surface receptor for CSF1 and IL34 and plays an essential role in the regulation of survival, proliferation and differentiation of hematopoietic precursor cells, especially mononuclear phagocytes, such as macrophages and monocytes. Promotes the release of pro-inflammatory chemokines in response to IL34 and CSF1, and thereby plays an important role in innate immunity and in inflammatory processes. Plays an important role in the regulation of osteoclast proliferation and differentiation, the regulation of bone resorption, and is required for normal bone and tooth development. Required for normal male and female fertility, and for normal development of milk ducts and acinar structures in the mammary gland during pregnancy. Promotes reorganization of the actin cytoskeleton, regulates formation of membrane ruffles, cell adhesion and cell migration, and promotes cancer cell invasion. Activates several signaling pathways in response to ligand binding, including the ERK1/2 and the JNK pathway. Phosphorylates PIK3R1, PLCG2, GRB2, SLA2 and CBL. Activation of PLCG2 leads to the production of the cellular signaling molecules diacylglycerol and inositol 1,4,5-trisphosphate, that then lead to the activation of protein kinase C family members, especially PRKCD. Phosphorylation of PIK3R1, the regulatory subunit of phosphatidylinositol 3-kinase, leads to activation of the AKT1 signaling pathway. Activated CSF1R also mediates activation of the MAP kinases MAPK1/ERK2 and/or MAPK3/ERK1, and of the SRC family kinases SRC, FYN and YES1. Activated CSF1R transmits signals both via proteins that directly interact with phosphorylated tyrosine residues in its intracellular domain, or via adapter proteins, such as GRB2. Promotes activation of STAT family members STAT3, STAT5A and/or STAT5B. Promotes tyrosine phosphorylation of SHC1 and INPP5D/SHIP-1. Receptor signaling is down-regulated by protein phosphatases, such as INPP5D/SHIP-1, that dephosphorylate the receptor and its downstream effectors, and by rapid internalization of the activated receptor. In the central nervous system, may play a role in the development of microglia macrophages. This Mus musculus (Mouse) protein is Macrophage colony-stimulating factor 1 receptor (Csf1r).